Here is a 348-residue protein sequence, read N- to C-terminus: RNA 3'-terminal phosphate cyclase (348 aa).

ATP is bound by residues glutamine 107 and 290-294 (HLADQ). The active-site Tele-AMP-histidine intermediate is histidine 316.

It belongs to the RNA 3'-terminal cyclase family. Type 1 subfamily.

The protein resides in the cytoplasm. The enzyme catalyses a 3'-end 3'-phospho-ribonucleotide-RNA + ATP = a 3'-end 2',3'-cyclophospho-ribonucleotide-RNA + AMP + diphosphate. Its function is as follows. Catalyzes the conversion of 3'-phosphate to a 2',3'-cyclic phosphodiester at the end of RNA. The mechanism of action of the enzyme occurs in 3 steps: (A) adenylation of the enzyme by ATP; (B) transfer of adenylate to an RNA-N3'P to produce RNA-N3'PP5'A; (C) and attack of the adjacent 2'-hydroxyl on the 3'-phosphorus in the diester linkage to produce the cyclic end product. The biological role of this enzyme is unknown but it is likely to function in some aspects of cellular RNA processing. This is RNA 3'-terminal phosphate cyclase from Trichormus variabilis (strain ATCC 29413 / PCC 7937) (Anabaena variabilis).